The following is an 83-amino-acid chain: Putative beta-neurotoxin RjAa17f (83 aa).

A signal peptide spans 1-18 (MKILIFIIASFMLIGVEC). Residues 19–82 (KEGYPMGRNG…VWDFSNIKCR (64 aa)) enclose the LCN-type CS-alpha/beta domain. Cystine bridges form between Cys29–Cys81, Cys33–Cys55, Cys40–Cys62, and Cys44–Cys64.

This sequence belongs to the long (4 C-C) scorpion toxin superfamily. Sodium channel inhibitor family. Beta subfamily. In terms of tissue distribution, expressed by the venom gland.

It localises to the secreted. Functionally, beta toxins bind voltage-independently at site-4 of sodium channels (Nav) and shift the voltage of activation toward more negative potentials thereby affecting sodium channel activation and promoting spontaneous and repetitive firing. The chain is Putative beta-neurotoxin RjAa17f from Rhopalurus junceus (Caribbean blue scorpion).